The chain runs to 211 residues: Uridine kinase (211 aa).

13 to 20 (GGSGSGKT) serves as a coordination point for ATP.

Belongs to the uridine kinase family.

Its subcellular location is the cytoplasm. It carries out the reaction uridine + ATP = UMP + ADP + H(+). The catalysed reaction is cytidine + ATP = CMP + ADP + H(+). It functions in the pathway pyrimidine metabolism; CTP biosynthesis via salvage pathway; CTP from cytidine: step 1/3. It participates in pyrimidine metabolism; UMP biosynthesis via salvage pathway; UMP from uridine: step 1/1. The chain is Uridine kinase from Lactobacillus johnsonii (strain CNCM I-12250 / La1 / NCC 533).